Consider the following 346-residue polypeptide: Holliday junction branch migration complex subunit RuvB (346 aa).

Over residues 1–16 (MSDADRLITPEKRGED) the composition is skewed to basic and acidic residues. Residues 1–23 (MSDADRLITPEKRGEDIDTTLRP) form a disordered region. The interval 1–182 (MSDADRLITP…FGIPVRLAFY (182 aa)) is large ATPase domain (RuvB-L). Residues Leu-21, Arg-22, Gly-63, Lys-66, Thr-67, Thr-68, 129 to 131 (EDF), Arg-172, Tyr-182, and Arg-219 each bind ATP. Residue Thr-67 coordinates Mg(2+). The small ATPAse domain (RuvB-S) stretch occupies residues 183–253 (TVDELELIVR…IADEALTRLL (71 aa)). The segment at 256–346 (NMGLDQLDMR…AQFRLTLEDD (91 aa)) is head domain (RuvB-H). Arg-292, Arg-311, and Arg-316 together coordinate DNA.

This sequence belongs to the RuvB family. Homohexamer. Forms an RuvA(8)-RuvB(12)-Holliday junction (HJ) complex. HJ DNA is sandwiched between 2 RuvA tetramers; dsDNA enters through RuvA and exits via RuvB. An RuvB hexamer assembles on each DNA strand where it exits the tetramer. Each RuvB hexamer is contacted by two RuvA subunits (via domain III) on 2 adjacent RuvB subunits; this complex drives branch migration. In the full resolvosome a probable DNA-RuvA(4)-RuvB(12)-RuvC(2) complex forms which resolves the HJ.

Its subcellular location is the cytoplasm. It catalyses the reaction ATP + H2O = ADP + phosphate + H(+). The RuvA-RuvB-RuvC complex processes Holliday junction (HJ) DNA during genetic recombination and DNA repair, while the RuvA-RuvB complex plays an important role in the rescue of blocked DNA replication forks via replication fork reversal (RFR). RuvA specifically binds to HJ cruciform DNA, conferring on it an open structure. The RuvB hexamer acts as an ATP-dependent pump, pulling dsDNA into and through the RuvAB complex. RuvB forms 2 homohexamers on either side of HJ DNA bound by 1 or 2 RuvA tetramers; 4 subunits per hexamer contact DNA at a time. Coordinated motions by a converter formed by DNA-disengaged RuvB subunits stimulates ATP hydrolysis and nucleotide exchange. Immobilization of the converter enables RuvB to convert the ATP-contained energy into a lever motion, pulling 2 nucleotides of DNA out of the RuvA tetramer per ATP hydrolyzed, thus driving DNA branch migration. The RuvB motors rotate together with the DNA substrate, which together with the progressing nucleotide cycle form the mechanistic basis for DNA recombination by continuous HJ branch migration. Branch migration allows RuvC to scan DNA until it finds its consensus sequence, where it cleaves and resolves cruciform DNA. The chain is Holliday junction branch migration complex subunit RuvB from Agrobacterium fabrum (strain C58 / ATCC 33970) (Agrobacterium tumefaciens (strain C58)).